Here is a 508-residue protein sequence, read N- to C-terminus: 6-phosphogluconate dehydrogenase, decarboxylating 2, chloroplastic (508 aa).

The N-terminal 12 residues, 1–12, are a transit peptide targeting the chloroplast; it reads MASPAPAPPAAS. NADP(+) contacts are provided by residues 28 to 33, 51 to 53, 95 to 97, and asparagine 123; these read GLATMG, NRT, and VQA. Substrate contacts are provided by residues asparagine 123 and 149–151; that span reads SGG. The active-site Proton acceptor is the lysine 203. Substrate is bound at residue 206-207; it reads HN. Glutamate 210 acts as the Proton donor in catalysis. 5 residues coordinate substrate: tyrosine 211, lysine 284, arginine 311, arginine 475, and histidine 481.

This sequence belongs to the 6-phosphogluconate dehydrogenase family. Homodimer.

The protein resides in the plastid. Its subcellular location is the chloroplast. It catalyses the reaction 6-phospho-D-gluconate + NADP(+) = D-ribulose 5-phosphate + CO2 + NADPH. It participates in carbohydrate degradation; pentose phosphate pathway; D-ribulose 5-phosphate from D-glucose 6-phosphate (oxidative stage): step 3/3. Functionally, catalyzes the oxidative decarboxylation of 6-phosphogluconate to ribulose 5-phosphate and CO(2), with concomitant reduction of NADP to NADPH. The polypeptide is 6-phosphogluconate dehydrogenase, decarboxylating 2, chloroplastic (G6PGH2) (Oryza sativa subsp. japonica (Rice)).